Here is a 177-residue protein sequence, read N- to C-terminus: ATP synthase subunit delta (177 aa).

Belongs to the ATPase delta chain family. F-type ATPases have 2 components, F(1) - the catalytic core - and F(0) - the membrane proton channel. F(1) has five subunits: alpha(3), beta(3), gamma(1), delta(1), epsilon(1). F(0) has three main subunits: a(1), b(2) and c(10-14). The alpha and beta chains form an alternating ring which encloses part of the gamma chain. F(1) is attached to F(0) by a central stalk formed by the gamma and epsilon chains, while a peripheral stalk is formed by the delta and b chains.

Its subcellular location is the cell inner membrane. Its function is as follows. F(1)F(0) ATP synthase produces ATP from ADP in the presence of a proton or sodium gradient. F-type ATPases consist of two structural domains, F(1) containing the extramembraneous catalytic core and F(0) containing the membrane proton channel, linked together by a central stalk and a peripheral stalk. During catalysis, ATP synthesis in the catalytic domain of F(1) is coupled via a rotary mechanism of the central stalk subunits to proton translocation. Functionally, this protein is part of the stalk that links CF(0) to CF(1). It either transmits conformational changes from CF(0) to CF(1) or is implicated in proton conduction. The protein is ATP synthase subunit delta of Herminiimonas arsenicoxydans.